The following is a 416-amino-acid chain: Glutamyl-tRNA reductase (416 aa).

Residues 51–54 (TCNR), Ser-110, 115–117 (EPQ), and Gln-121 each bind substrate. Cys-52 functions as the Nucleophile in the catalytic mechanism. 190–195 (GAGQTG) contributes to the NADP(+) binding site.

The protein belongs to the glutamyl-tRNA reductase family. In terms of assembly, homodimer.

It catalyses the reaction (S)-4-amino-5-oxopentanoate + tRNA(Glu) + NADP(+) = L-glutamyl-tRNA(Glu) + NADPH + H(+). It participates in porphyrin-containing compound metabolism; protoporphyrin-IX biosynthesis; 5-aminolevulinate from L-glutamyl-tRNA(Glu): step 1/2. In terms of biological role, catalyzes the NADPH-dependent reduction of glutamyl-tRNA(Glu) to glutamate 1-semialdehyde (GSA). The chain is Glutamyl-tRNA reductase from Francisella tularensis subsp. tularensis (strain FSC 198).